The sequence spans 372 residues: MTQSRRMLVLRAVVEDYIRSQEPVGSTSLTRDHDLGVSSATIRNDMAALEDEGYLIQPHTSAGRVPTEKGYRYFVDRLATVVPLSEAQRRGINSFLSGSVSLKDALQRSARLLSEITGQVAVVTSPSLAKATLRHVEMVPVAMTTLLAVVITDTGRVAQHGLTIASMPAVDEINRLSNTVNEQCVGLSLSKSAETVRSIAASAGYESVRGVADALADAFESMALDERANELYMSGTSHLAHSRSLTDLAPLFDALEEQVVLMKLMSNLSEETNASGVGVAIGSEMHTPGLLHASVVSSGYGRSGEAGEPAGNDPVGEPETESETESQTNDMEPIAFVGSIGPTHMDYAATMAAVRAVARYLTAFLSEGRTQD.

The segment at 296–331 (VSSGYGRSGEAGEPAGNDPVGEPETESETESQTNDM) is disordered.

The protein belongs to the HrcA family.

In terms of biological role, negative regulator of class I heat shock genes (grpE-dnaK-dnaJ and groELS operons). Prevents heat-shock induction of these operons. The chain is Heat-inducible transcription repressor HrcA from Bifidobacterium longum subsp. infantis (strain ATCC 15697 / DSM 20088 / JCM 1222 / NCTC 11817 / S12).